A 601-amino-acid polypeptide reads, in one-letter code: Cdc42-interacting protein 4 (601 aa).

The segment at 1 to 117 (MDWGTELWDQ…EMKQERKMHF (117 aa)) is required for podosome formation and interaction with AKAP9 and microtubules. The tract at residues 1-117 (MDWGTELWDQ…EMKQERKMHF (117 aa)) is required for translocation to the plasma membrane in response to insulin. The F-BAR domain occupies 1–264 (MDWGTELWDQ…AANAVDPKND (264 aa)). Residues 67–259 (FSQQQSFVQI…EGMKVAANAV (193 aa)) adopt a coiled-coil conformation. Disordered stretches follow at residues 280–358 (GDVE…GRDP), 390–420 (DFSH…EVDQ), and 479–543 (RGDS…SPIG). A compositionally biased stretch (polar residues) spans 289 to 302 (QPMNRAPSDSSLGT). An interaction with CDC42 region spans residues 293–537 (RAPSDSSLGT…TEFDEDFEEE (245 aa)). Residues 293–601 (RAPSDSSLGT…PTSYLRVTLN (309 aa)) are interaction with PDE6G. Residues Ser-296, Ser-298, and Ser-299 each carry the phosphoserine modification. A compositionally biased stretch (basic residues) spans 314–329 (GRSRTKRWPFGKKNKP). The residue at position 335 (Ser-335) is a Phosphoserine. The segment covering 336 to 346 (PLGGPVPSALP) has biased composition (low complexity). Ser-351 carries the post-translational modification Phosphoserine. A coiled-coil region spans residues 388 to 481 (TEDFSHLPPE…ESRVLSNRGD (94 aa)). In terms of domain architecture, REM-1 spans 393 to 470 (HLPPEQQRKR…VQKYEAWLAE (78 aa)). Positions 407-420 (LEERSRELQKEVDQ) are enriched in basic and acidic residues. Positions 471-601 (AESRVLSNRG…PTSYLRVTLN (131 aa)) are required for interaction with FASLG and localization to lysosomes. Ser-482 bears the Phosphoserine mark. Residues 487-541 (ARPPDPPASAPPDSSSNSASQDTKESSEEPPSEESQDTPIYTEFDEDFEEEPTSP) form an interaction with DNM2 and WASL region. The span at 497–506 (PPDSSSNSAS) shows a compositional bias: low complexity. A compositionally biased stretch (acidic residues) spans 529 to 538 (EFDEDFEEEP). Positions 529 to 601 (EFDEDFEEEP…PTSYLRVTLN (73 aa)) are interaction with DNM1 and WASL. The required for podosome formation stretch occupies residues 538 to 601 (PTSPIGHCVA…PTSYLRVTLN (64 aa)). Positions 540–601 (SPIGHCVAIY…PTSYLRVTLN (62 aa)) constitute an SH3 domain. The segment at 544–601 (HCVAIYHFEGSSEGTISMAEGEDLSLMEEDKGDGWTRVRRKEGGEGYVPTSYLRVTLN) is interaction with WAS. Residues 546-601 (VAIYHFEGSSEGTISMAEGEDLSLMEEDKGDGWTRVRRKEGGEGYVPTSYLRVTLN) form an interaction with ARHGAP17, DAAM1, DIAPH1 and DIAPH2 region.

It belongs to the FNBP1 family. In terms of assembly, interacts specifically with GTP-bound RHOQ. Interacts with DNM2 and PDE6G. Homodimerizes, the dimers can polymerize end-to-end to form filamentous structures. Interacts specifically with GTP-bound CDC42. Interacts with AKAP9, ARHGAP17, DAAM1, DIAPH1, DIAPH2, DNM1, FASLG/FASL, GAPVD1, LYN, microtubules, SRC, WAS/WASP and WASL/N-WASP. Interacts with the ligand binding domain of the thyroid receptor (TR) in the presence of thyroid hormone. May interact with CTNNB1 and HD/HTT. Tyrosine phosphorylated. Also phosphorylated by PKA. Expressed in brain, colon, heart, kidney, liver, lung, megakaryocyte, ovary, pancreas, peripheral blood lymphocytes, placenta, prostate, skeletal muscle, small intestine, spleen, testis, thymus and trachea.

It localises to the cytoplasm. The protein localises to the cytoskeleton. Its subcellular location is the cell cortex. It is found in the lysosome. The protein resides in the golgi apparatus. It localises to the cell membrane. The protein localises to the cell projection. Its subcellular location is the phagocytic cup. It is found in the perinuclear region. In terms of biological role, required for translocation of GLUT4 to the plasma membrane in response to insulin signaling. Required to coordinate membrane tubulation with reorganization of the actin cytoskeleton during endocytosis. Binds to lipids such as phosphatidylinositol 4,5-bisphosphate and phosphatidylserine and promotes membrane invagination and the formation of tubules. Also promotes CDC42-induced actin polymerization by recruiting WASL/N-WASP which in turn activates the Arp2/3 complex. Actin polymerization may promote the fission of membrane tubules to form endocytic vesicles. Required for the formation of podosomes, actin-rich adhesion structures specific to monocyte-derived cells. May be required for the lysosomal retention of FASLG/FASL. The chain is Cdc42-interacting protein 4 (TRIP10) from Homo sapiens (Human).